The following is a 292-amino-acid chain: MQTTLQITPTGATLGATVTGVHLATLDDAGFAALHAAWLQHALLIFPGQHLSNDQQITFAKRFGAIERIGGGDIVAISNVKADGTVRQHSPAEWDDMMKVIVGNMAWHADSTYMPVMAQGAVFSAEVVPAVGGRTCFADMRAAYDALDEATRALVHQRSARHSLVYSQSKLGHVQQAGSAYIGYGMDTTATPLRPLVKVHPETGRPSLLIGRHAHAIPGMDAAESERFLEGLVDWACQAPRVHAHQWAAGDVVVWDNRCLLHRAEPWDFKLPRVMWHSRLAGRPETEGAALV.

Residues His-108 and Asp-110 each coordinate Fe cation. Residues Thr-135 and Trp-247 each coordinate 2-oxoglutarate. Position 262 (His-262) interacts with Fe cation. Residue Arg-273 coordinates 2-oxoglutarate.

The protein belongs to the TfdA dioxygenase family. As to quaternary structure, monomer. The cofactor is Fe cation. L-ascorbate serves as cofactor.

The enzyme catalyses (S)-2-(4-chloro-2-methylphenoxy)propanoate + 2-oxoglutarate + O2 = 2-methyl-4-chlorophenol + pyruvate + succinate + CO2. The catalysed reaction is (S)-(2,4-dichlorophenoxy)propanoate + 2-oxoglutarate + O2 = 2,4-dichlorophenol + pyruvate + succinate + CO2. It functions in the pathway xenobiotic degradation; 2-(2,4-dichlorophenoxy)propanoate degradation. Its activity is regulated as follows. Inhibited by divalent cations, most significantly by copper and nickel, and by diethylpyrocarbonate (DEPC). Its function is as follows. Involved in the degradation of the phenoxypropionate herbicides. Catalyzes the enantiospecific cleavage of the ether bond in the herbicid S-dichlorprop ((S)-2-(2,4-dichlorophenoxy)propionate)(S-2,4-DP) and S-mecoprop ((S)-2-(4-chloro-2-methylphenoxy)propionate)(S-2,4-MCPP). It can also accept (RS)-2-(4-chlorophenoxy)propionate, (RS)-2-(m-chlorophenoxy)propionate and phenoxyacetate derivatives such as 2,4-dichlorophenoxyacetate (2,4-D), however it can only accept 2-oxoglutarate as oxygen acceptor. This chain is (S)-phenoxypropionate/alpha-ketoglutarate-dioxygenase, found in Delftia acidovorans (Pseudomonas acidovorans).